Consider the following 635-residue polypeptide: Chaperone protein DnaK (635 aa).

Residue Thr198 is modified to Phosphothreonine; by autocatalysis. Residues 606–635 (QATAASPGAEAPKADDDVVDAEFSEVDENK) form a disordered region. The segment covering 622–635 (DVVDAEFSEVDENK) has biased composition (acidic residues).

Belongs to the heat shock protein 70 family.

Functionally, acts as a chaperone. The sequence is that of Chaperone protein DnaK from Novosphingobium aromaticivorans (strain ATCC 700278 / DSM 12444 / CCUG 56034 / CIP 105152 / NBRC 16084 / F199).